Consider the following 573-residue polypeptide: NADH-ubiquinone oxidoreductase chain 5 (573 aa).

The next 16 membrane-spanning stretches (helical) occupy residues 4-24 (ISFINLISISLTCFLLSLYYL), 44-64 (IVMTFLFDWMSLLFMSFVLMI), 85-105 (FIMLVLMFVLSMMLLIISPNL), 106-126 (VSILLGWDGLGLVSYCLVIYF), 147-167 (VALLLAIAWMLNYGSWNYIFY), 170-190 (VMQNEFSMLMIGSLVMLAAMT), 212-234 (SALVHSSTLVTAGVYLLIRFNIV), 239-259 (WLGQLLLLLSGLTMFMAGLGA), 268-288 (IIALSTLSQLGLMMSILSMGF), 294-314 (FHLLTHALFKALLFMCAGAII), 337-357 (SACFNVSNLALCGMPFLAGFY), 377-396 (FLYFFSTGLTVSYSFRLVYY), 422-442 (LGLLFMSIIGGSMLNWLIFPF), 452-472 (LKMLTLFVCIVGGLFGYLISI), 487-507 (LTLFLGSMWFMPYISTYGMIF), and 552-572 (LKIYLMLFVFWIMILFSFLLF).

The protein belongs to the complex I subunit 5 family.

The protein resides in the mitochondrion inner membrane. It catalyses the reaction a ubiquinone + NADH + 5 H(+)(in) = a ubiquinol + NAD(+) + 4 H(+)(out). Core subunit of the mitochondrial membrane respiratory chain NADH dehydrogenase (Complex I) that is believed to belong to the minimal assembly required for catalysis. Complex I functions in the transfer of electrons from NADH to the respiratory chain. The immediate electron acceptor for the enzyme is believed to be ubiquinone. In Drosophila yakuba (Fruit fly), this protein is NADH-ubiquinone oxidoreductase chain 5 (mt:ND5).